The following is a 50-amino-acid chain: Large ribosomal subunit protein bL33 (50 aa).

This sequence belongs to the bacterial ribosomal protein bL33 family.

This chain is Large ribosomal subunit protein bL33, found in Koribacter versatilis (strain Ellin345).